The following is a 188-amino-acid chain: Segregation and condensation protein B (188 aa).

This sequence belongs to the ScpB family. Homodimer. Homodimerization may be required to stabilize the binding of ScpA to the Smc head domains. Component of a cohesin-like complex composed of ScpA, ScpB and the Smc homodimer, in which ScpA and ScpB bind to the head domain of Smc. The presence of the three proteins is required for the association of the complex with DNA.

It localises to the cytoplasm. Functionally, participates in chromosomal partition during cell division. May act via the formation of a condensin-like complex containing Smc and ScpA that pull DNA away from mid-cell into both cell halves. This Lactococcus lactis subsp. cremoris (strain MG1363) protein is Segregation and condensation protein B.